Consider the following 237-residue polypeptide: Large ribosomal subunit protein uL1 (237 aa).

The protein belongs to the universal ribosomal protein uL1 family. Part of the 50S ribosomal subunit.

In terms of biological role, binds directly to 23S rRNA. The L1 stalk is quite mobile in the ribosome, and is involved in E site tRNA release. Protein L1 is also a translational repressor protein, it controls the translation of the L11 operon by binding to its mRNA. The protein is Large ribosomal subunit protein uL1 of Corynebacterium kroppenstedtii (strain DSM 44385 / JCM 11950 / CIP 105744 / CCUG 35717).